Here is a 96-residue protein sequence, read N- to C-terminus: Aspartyl/glutamyl-tRNA(Asn/Gln) amidotransferase subunit C (96 aa).

It belongs to the GatC family. As to quaternary structure, heterotrimer of A, B and C subunits.

The enzyme catalyses L-glutamyl-tRNA(Gln) + L-glutamine + ATP + H2O = L-glutaminyl-tRNA(Gln) + L-glutamate + ADP + phosphate + H(+). The catalysed reaction is L-aspartyl-tRNA(Asn) + L-glutamine + ATP + H2O = L-asparaginyl-tRNA(Asn) + L-glutamate + ADP + phosphate + 2 H(+). Its function is as follows. Allows the formation of correctly charged Asn-tRNA(Asn) or Gln-tRNA(Gln) through the transamidation of misacylated Asp-tRNA(Asn) or Glu-tRNA(Gln) in organisms which lack either or both of asparaginyl-tRNA or glutaminyl-tRNA synthetases. The reaction takes place in the presence of glutamine and ATP through an activated phospho-Asp-tRNA(Asn) or phospho-Glu-tRNA(Gln). This is Aspartyl/glutamyl-tRNA(Asn/Gln) amidotransferase subunit C from Neisseria gonorrhoeae (strain ATCC 700825 / FA 1090).